A 342-amino-acid polypeptide reads, in one-letter code: Aristolochene synthase prx2 (342 aa).

Mg(2+) contacts are provided by Asp115, Asn244, Ser248, and Glu252. Residues Arg340 and Tyr341 each contribute to the (2E,6E)-farnesyl diphosphate site.

This sequence belongs to the terpene synthase family. As to quaternary structure, homodimer. It depends on Mg(2+) as a cofactor.

The catalysed reaction is (2E,6E)-farnesyl diphosphate = (+)-aristolochene + diphosphate. The protein operates within sesquiterpene biosynthesis; aristolochene biosynthesis; aristolochene from farnesyl diphosphate: step 1/1. Aristolochene synthase; part of the gene cluster that mediates the biosynthesis of PR-toxin, a bicyclic sesquiterpene belonging to the eremophilane class and acting as a mycotoxin. The first step of the pathway is catalyzed by the aristolochene synthase which performs the cyclization of trans,trans-farnesyl diphosphate (FPP) to the bicyclic sesquiterpene aristolochene. Following the formation of aristolochene, the non-oxygenated aristolochene is converted to the trioxygenated intermediate eremofortin B, via 7-epi-neopetasone. This conversion appears to involve three enzymes, a hydroxysterol oxidase-like enzyme, the quinone-oxidase prx3 that forms the quinone-type-structure in the bicyclic nucleus of aristolochene with the C8-oxo group and the C-3 hydroxyl group, and the P450 monooxygenase prx9 that introduces the epoxide at the double bond between carbons 1 and 2. No monoxy or dioxy-intermediates have been reported to be released to the broth, so these three early oxidative reactions may be coupled together. Eremofortin B is further oxidized by another P450 monooxygenase, that introduces a second epoxide between carbons 7 and 11 prior to acetylation to eremofortin A by the acetyltransferase prx11. The second epoxidation may be performed by a second P450 monooxygenase. After the acetylation step, the conversion of eremofortin A to eremofortin C and then to PR-toxin requires only two enzymes. First the conversion of eremofortin A to eremofortin C proceeds by oxidation of the side chain of the molecule at C-12 and is catalyzed by the short-chain oxidoreductase prx1. The cytochrome P450 monooxygenase prx8 also plays a role in this step. The primary alcohol formed at C-12 is finally oxidized by the short-chain alcohol dehydrogenase prx4 that forms PR-toxin. The sequence is that of Aristolochene synthase prx2 from Penicillium rubens (strain ATCC 28089 / DSM 1075 / NRRL 1951 / Wisconsin 54-1255) (Penicillium chrysogenum).